Reading from the N-terminus, the 1058-residue chain is Kinesin-like protein KIN-5D (1058 aa).

The tract at residues 1-43 (MDSIQQRRGGIVSLSPAQTPRSSDKSARESRSSESNSTNRNDK) is disordered. Residues 22–32 (SSDKSARESRS) show a composition bias toward basic and acidic residues. The 343-residue stretch at 48-390 (NVQVILRCRP…LDYAHRAKNI (343 aa)) folds into the Kinesin motor domain. ATP is bound at residue 134–141 (GQTGTGKT). Residues 438-517 (QEEAEKKAMA…QANATIKEKE (80 aa)) are a coiled coil.

Belongs to the TRAFAC class myosin-kinesin ATPase superfamily. Kinesin family. KIN-5/BimC subfamily.

The protein resides in the cytoplasm. It localises to the cytoskeleton. It is found in the spindle. In terms of biological role, responsible for microtubule translocation. May be important for the organization of phragmoplast-specific arrays of microtubules. Plays an essential role in stabilizing the mitotic spindle. Required during mitotic cytokinesis. The polypeptide is Kinesin-like protein KIN-5D (Arabidopsis thaliana (Mouse-ear cress)).